The sequence spans 511 residues: DnaJ homolog 1, mitochondrial (511 aa).

Residues 1 to 55 constitute a mitochondrion transit peptide; the sequence is MAFQQGVLSRCSGVFRHHVGHSRHINNILYRHAIAFASIAPRIPKSSFHTSAIRN. The J domain occupies 59–127; that stretch reads FKDPYDTLGL…RQQYDQFGPA (69 aa). The segment at 217–297 adopts a CR-type zinc-finger fold; it reads SKNVQLRFSA…CHGEGVQVNR (81 aa). CXXCXGXG motif repeat units lie at residues 230 to 237, 247 to 254, 269 to 276, and 285 to 292; these read CSTCSGTG, CSTCHGTG, CPTCNGEG, and CTKCHGEG.

It is found in the mitochondrion. Functionally, plays a role in mitochondrial biogenesis and protein folding. This chain is DnaJ homolog 1, mitochondrial (MDJ1), found in Saccharomyces cerevisiae (strain ATCC 204508 / S288c) (Baker's yeast).